The following is a 497-amino-acid chain: ADP-dependent glucokinase (497 aa).

The signal sequence occupies residues methionine 1–leucine 22. The ADPK domain maps to serine 52 to tyrosine 497. Positions 297, 328, and 481 each coordinate Mg(2+). The Proton acceptor role is filled by aspartate 481.

The protein belongs to the ADP-dependent glucokinase family. In terms of assembly, monomer. It depends on Mg(2+) as a cofactor.

Its subcellular location is the secreted. It catalyses the reaction D-glucose + ADP = D-glucose 6-phosphate + AMP + H(+). Its pathway is carbohydrate degradation; glycolysis. Its function is as follows. Catalyzes the phosphorylation of D-glucose to D-glucose 6-phosphate using ADP as the phosphate donor. GDP and CDP can replace ADP, but with reduced efficiency. In Homo sapiens (Human), this protein is ADP-dependent glucokinase (ADPGK).